Reading from the N-terminus, the 629-residue chain is Aspartate--tRNA(Asp/Asn) ligase (629 aa).

Residues 1–24 (MERSSRADLISEDSHPARTHTCGD) are disordered. The segment covering 12 to 24 (EDSHPARTHTCGD) has biased composition (basic and acidic residues). Glu194 serves as a coordination point for L-aspartate. The interval 218-221 (QTYK) is aspartate. Residue Arg240 coordinates L-aspartate. Residues 240 to 242 (RDE) and Gln249 contribute to the ATP site. His474 serves as a coordination point for L-aspartate. Glu508 contacts ATP. L-aspartate is bound at residue Arg515. Residue 560–563 (GLDR) participates in ATP binding.

Belongs to the class-II aminoacyl-tRNA synthetase family. Type 1 subfamily. Homodimer.

The protein resides in the cytoplasm. It catalyses the reaction tRNA(Asx) + L-aspartate + ATP = L-aspartyl-tRNA(Asx) + AMP + diphosphate. In terms of biological role, aspartyl-tRNA synthetase with relaxed tRNA specificity since it is able to aspartylate not only its cognate tRNA(Asp) but also tRNA(Asn). Reaction proceeds in two steps: L-aspartate is first activated by ATP to form Asp-AMP and then transferred to the acceptor end of tRNA(Asp/Asn). This is Aspartate--tRNA(Asp/Asn) ligase from Salinibacter ruber (strain DSM 13855 / M31).